The primary structure comprises 465 residues: Exoenzymes regulatory protein AepA (465 aa).

The first 21 residues, 1 to 21 (MKFNVKMLSVTLGLFTSHAFA), serve as a signal peptide directing secretion.

The protein belongs to the metallo-dependent hydrolases superfamily.

Functionally, involved in the control of extracellular enzymes production. Stimulates PEL, PEH, CEL, and PRT production. The sequence is that of Exoenzymes regulatory protein AepA (aepA) from Pectobacterium carotovorum subsp. carotovorum (Erwinia carotovora subsp. carotovora).